Reading from the N-terminus, the 71-residue chain is DNA-directed RNA polymerase subunit epsilon (71 aa).

Belongs to the RNA polymerase subunit epsilon family. As to quaternary structure, RNAP is composed of a core of 2 alpha, a beta and a beta' subunit. The core is associated with a delta subunit, and at least one of epsilon or omega. When a sigma factor is associated with the core the holoenzyme is formed, which can initiate transcription.

It carries out the reaction RNA(n) + a ribonucleoside 5'-triphosphate = RNA(n+1) + diphosphate. Functionally, a non-essential component of RNA polymerase (RNAP). The chain is DNA-directed RNA polymerase subunit epsilon from Geobacillus thermodenitrificans (strain NG80-2).